Here is an 817-residue protein sequence, read N- to C-terminus: V-type proton ATPase subunit a1 (817 aa).

Residues 1–422 are Cytoplasmic-facing; the sequence is MEEFLDKLPQ…PAVYSVVTYP (422 aa). A coiled-coil region spans residues 97–133; it reads DIALGDLERQLADHEHEVLEMNSNSEKLRQTYNELLE. Residues 423-443 traverse the membrane as a helical segment; that stretch reads FLFAVMFGDWGHGLCLLLGAL. Topologically, residues 444–468 are vacuolar; the sequence is YLLARERKLSTQKLGSFMEMLFGGR. The chain crosses the membrane as a helical span at residues 469 to 489; the sequence is YVILLMALFSIYCGLIYNEFF. Residues 490 to 547 lie on the Cytoplasmic side of the membrane; that stretch reads SVPFHIFGGSAYKCRDTTCSDAYTVGLIKYRDPYPFGVDPSWRGSRTELPYLNSLKMK. A helical membrane pass occupies residues 548 to 568; it reads MSILLGIAQMNLGLILSFFNA. Over 569 to 580 the chain is Vacuolar; that stretch reads RFFGSSLDIRYQ. The helical transmembrane segment at 581 to 601 threads the bilayer; that stretch reads FIPQMIFLNSLFGYLSLLIII. Topologically, residues 602-639 are cytoplasmic; that stretch reads KWCTGSQADLYHVMIYMFLSPTEELGENELFWGQRPLQ. Residues 640 to 660 traverse the membrane as a helical segment; sequence IVLLLLAFIAVPWMLFPKPFA. Topologically, residues 661 to 758 are vacuolar; that stretch reads LRKIHMERFQ…VLLLAWGYEN (98 aa). A helical membrane pass occupies residues 759-779; that stretch reads ILIRLIGVAVFAFATAFILLM. At 780-817 the chain is on the cytoplasmic side; that stretch reads METLSAFLHALRLHWVEFMGKFFNGDGYKFKPFSFALI.

The protein belongs to the V-ATPase 116 kDa subunit family. In terms of assembly, V-ATPase is a heteromultimeric enzyme composed of a peripheral catalytic V1 complex (components A to H) attached to an integral membrane V0 proton pore complex (components: a, c, c'', d and e).

The protein localises to the vacuole membrane. It localises to the golgi apparatus. Its subcellular location is the trans-Golgi network membrane. Its function is as follows. Essential component of the vacuolar proton pump (V-ATPase), a multimeric enzyme that catalyzes the translocation of protons across the membranes. Required for assembly and activity of the V-ATPase. Required during cell expansion. The sequence is that of V-type proton ATPase subunit a1 from Arabidopsis thaliana (Mouse-ear cress).